Consider the following 875-residue polypeptide: Serine/threonine-protein kinase D2 (875 aa).

Residues Met1 to Pro33 are disordered. The span at Ser14–Gly24 shows a compositional bias: pro residues. Residues Ser26 and Ser30 each carry the phosphoserine modification. Tyr87 is subject to Phosphotyrosine. The segment at Pro138–Cys188 adopts a Phorbol-ester/DAG-type 1 zinc-finger fold. Ser197, Ser198, Ser200, Ser203, Ser206, Ser211, Ser212, and Ser214 each carry phosphoserine. Residues Arg224–Tyr247 are disordered. A compositionally biased stretch (low complexity) spans Ser236–Ser245. Position 244 is a phosphoserine; by CSNK1D and CSNK1E (Ser244). Ser245 is modified (phosphoserine). Residues Pro265 to Cys315 form a Phorbol-ester/DAG-type 2 zinc finger. Residues Thr398–Met510 enclose the PH domain. Tyr408 carries the post-translational modification Phosphotyrosine. Tyr439 bears the Phosphotyrosine; by ABL1 mark. Ser519 carries the post-translational modification Phosphoserine. In terms of domain architecture, Protein kinase spans Ile552 to Leu808. ATP contacts are provided by residues Leu558 to Val566 and Lys581. Asp675 (proton acceptor) is an active-site residue. Position 707 is a phosphoserine; by PKC (Ser707). A Phosphoserine modification is found at Ser711. At Tyr718 the chain carries Phosphotyrosine; by ABL1. Residues Leu725–Gln727 carry the Important for ABL1-mediated Tyr-718 phosphorylation motif. Ser873 bears the Phosphoserine; by autocatalysis mark.

The protein belongs to the protein kinase superfamily. CAMK Ser/Thr protein kinase family. PKD subfamily. As to quaternary structure, interacts (via C-terminus) with LCK. Interacts (via N-terminus and zing-finger domain 1 and 2) with PRKCD in response to oxidative stress; the interaction is independent of PRKD2 tyrosine phosphorylation. It depends on Mg(2+) as a cofactor. Phosphorylation of Ser-873 correlates with the activation status of the kinase. Ser-707 is probably phosphorylated by PKC. Phosphorylation at Ser-244 by CSNK1D and CSNK1E promotes nuclear localization and substrate targeting. Phosphorylation at Ser-244, Ser-707 and Ser-711 is required for nuclear localization. Phosphorylated at Tyr-438 by ABL1 in response to oxidative stress. Phosphorylated at Tyr-718 by ABL1 specifically in response to oxidative stress; requires prior phosphorylation at Ser-707 or/and Ser-711.

The protein localises to the cytoplasm. The protein resides in the cell membrane. Its subcellular location is the golgi apparatus. It localises to the trans-Golgi network. It carries out the reaction L-seryl-[protein] + ATP = O-phospho-L-seryl-[protein] + ADP + H(+). The catalysed reaction is L-threonyl-[protein] + ATP = O-phospho-L-threonyl-[protein] + ADP + H(+). Its activity is regulated as follows. Activated by DAG and phorbol esters. Phorbol-ester/DAG-type domains bind DAG, mediating translocation to membranes. Autophosphorylation of Ser-711 and phosphorylation of Ser-707 by PKC relieves auto-inhibition by the PH domain. Catalytic activity is further increased by phosphorylation at Tyr-718 in response to oxidative stress. In terms of biological role, serine/threonine-protein kinase that converts transient diacylglycerol (DAG) signals into prolonged physiological effects downstream of PKC, and is involved in the regulation of cell proliferation via MAPK1/3 (ERK1/2) signaling, oxidative stress-induced NF-kappa-B activation, inhibition of HDAC7 transcriptional repression, signaling downstream of T-cell antigen receptor (TCR) and cytokine production, and plays a role in Golgi membrane trafficking, angiogenesis, secretory granule release and cell adhesion. May potentiate mitogenesis induced by the neuropeptide bombesin by mediating an increase in the duration of MAPK1/3 (ERK1/2) signaling, which leads to accumulation of immediate-early gene products including FOS that stimulate cell cycle progression. In response to oxidative stress, is phosphorylated at Tyr-438 and Tyr-718 by ABL1, which leads to the activation of PRKD2 without increasing its catalytic activity, and mediates activation of NF-kappa-B. In response to the activation of the gastrin receptor CCKBR, is phosphorylated at Ser-244 by CSNK1D and CSNK1E, translocates to the nucleus, phosphorylates HDAC7, leading to nuclear export of HDAC7 and inhibition of HDAC7 transcriptional repression of NR4A1/NUR77. Upon TCR stimulation, is activated independently of ZAP70, translocates from the cytoplasm to the nucleus and is required for interleukin-2 (IL2) promoter up-regulation. During adaptive immune responses, is required in peripheral T-lymphocytes for the production of the effector cytokines IL2 and IFNG after TCR engagement and for optimal induction of antibody responses to antigens. In epithelial cells stimulated with lysophosphatidic acid (LPA), is activated through a PKC-dependent pathway and mediates LPA-stimulated interleukin-8 (IL8) secretion via a NF-kappa-B-dependent pathway. During TCR-induced T-cell activation, interacts with and is activated by the tyrosine kinase LCK, which results in the activation of the NFAT transcription factors. In the trans-Golgi network (TGN), regulates the fission of transport vesicles that are on their way to the plasma membrane and in polarized cells is involved in the transport of proteins from the TGN to the basolateral membrane. Plays an important role in endothelial cell proliferation and migration prior to angiogenesis, partly through modulation of the expression of KDR/VEGFR2 and FGFR1, two key growth factor receptors involved in angiogenesis. In secretory pathway, is required for the release of chromogranin-A (CHGA)-containing secretory granules from the TGN. Downstream of PRKCA, plays important roles in angiotensin-2-induced monocyte adhesion to endothelial cells. The protein is Serine/threonine-protein kinase D2 (Prkd2) of Rattus norvegicus (Rat).